A 273-amino-acid chain; its full sequence is Eukaryotic translation initiation factor 3 subunit G-2 (273 aa).

The RRM domain occupies 193–271 (SAVRISNLSE…LILCVEWSKP (79 aa)).

This sequence belongs to the eIF-3 subunit G family. Component of the eukaryotic translation initiation factor 3 (eIF-3) complex. The eIF-3 complex interacts with pix.

The protein localises to the cytoplasm. In terms of biological role, RNA-binding component of the eukaryotic translation initiation factor 3 (eIF-3) complex, which is involved in protein synthesis of a specialized repertoire of mRNAs and, together with other initiation factors, stimulates binding of mRNA and methionyl-tRNAi to the 40S ribosome. The eIF-3 complex specifically targets and initiates translation of a subset of mRNAs involved in cell proliferation. This subunit can bind 18S rRNA. The chain is Eukaryotic translation initiation factor 3 subunit G-2 from Drosophila melanogaster (Fruit fly).